We begin with the raw amino-acid sequence, 74 residues long: Anaphase-promoting complex subunit 13 (74 aa).

The interval 33 to 53 (LNELPEPEQDNGGTTESVKEQ) is disordered.

This sequence belongs to the APC13 family. In terms of assembly, the mammalian APC/C is composed at least of 14 distinct subunits ANAPC1, ANAPC2, CDC27/APC3, ANAPC4, ANAPC5, CDC16/APC6, ANAPC7, CDC23/APC8, ANAPC10, ANAPC11, CDC26/APC12, ANAPC13, ANAPC15 and ANAPC16 that assemble into a complex of at least 19 chains with a combined molecular mass of around 1.2 MDa; APC/C interacts with FZR1 and FBXO5.

The protein resides in the nucleus. It functions in the pathway protein modification; protein ubiquitination. Its function is as follows. Component of the anaphase promoting complex/cyclosome (APC/C), a cell cycle-regulated E3 ubiquitin ligase that controls progression through mitosis and the G1 phase of the cell cycle. The APC/C complex acts by mediating ubiquitination and subsequent degradation of target proteins: it mainly mediates the formation of 'Lys-11'-linked polyubiquitin chains and, to a lower extent, the formation of 'Lys-48'- and 'Lys-63'-linked polyubiquitin chains. The APC/C complex catalyzes assembly of branched 'Lys-11'-/'Lys-48'-linked branched ubiquitin chains on target proteins. The protein is Anaphase-promoting complex subunit 13 (ANAPC13) of Bos taurus (Bovine).